The sequence spans 479 residues: Probable periplasmic serine endoprotease DegP-like (479 aa).

The signal sequence occupies residues 1–27 (MSMPSLKKYAAALFAVFLMGQSVAAHA). Active-site charge relay system residues include histidine 118, aspartate 148, and serine 221. Substrate contacts are provided by residues 219-221 (GNS) and 276-280 (LGVVI). PDZ domains lie at 265-356 (LKAS…VREG) and 362-468 (KVAV…LRQG). The tract at residues 368-390 (MPADDGDEATNDAAPSAERSSNR) is disordered.

Belongs to the peptidase S1C family.

Its subcellular location is the periplasm. It carries out the reaction Acts on substrates that are at least partially unfolded. The cleavage site P1 residue is normally between a pair of hydrophobic residues, such as Val-|-Val.. Functionally, might be efficient in the degradation of transiently denatured and unfolded proteins which accumulate in the periplasm following stress conditions. The chain is Probable periplasmic serine endoprotease DegP-like from Pseudomonas fulva (strain 12-X).